The following is a 230-amino-acid chain: MVKRSKKYREAAERVDRNNLYTANEAIALLKSMPAYNFDQTVEAVFRLSVDPRKADQLVRGTVNLPHGTGKTAKVLVFARGPKATEATEAGADIVGDDDLIAKVQGGFLDFDAVVATPDMMGKVGRLGRVLGPRGLMPNPKTGTVTMDVTKAVKDIKGGKIEFRVDKNGNLSFLIGKMSFDESALDENFKAVADEVKRLKPATVKGRYLTKATITSTMNPGVPVDPNTLA.

The protein belongs to the universal ribosomal protein uL1 family. As to quaternary structure, part of the 50S ribosomal subunit.

Functionally, binds directly to 23S rRNA. The L1 stalk is quite mobile in the ribosome, and is involved in E site tRNA release. Protein L1 is also a translational repressor protein, it controls the translation of the L11 operon by binding to its mRNA. In Bifidobacterium longum subsp. infantis (strain ATCC 15697 / DSM 20088 / JCM 1222 / NCTC 11817 / S12), this protein is Large ribosomal subunit protein uL1.